Consider the following 198-residue polypeptide: Recombination protein RecR (198 aa).

The C4-type zinc-finger motif lies at 57 to 72 (CSVCGHITDRDPCYIC). The 96-residue stretch at 80–175 (SVVCVVQEPK…KVTRIAHGLP (96 aa)) folds into the Toprim domain.

It belongs to the RecR family.

In terms of biological role, may play a role in DNA repair. It seems to be involved in an RecBC-independent recombinational process of DNA repair. It may act with RecF and RecO. The chain is Recombination protein RecR from Bacillus mycoides (strain KBAB4) (Bacillus weihenstephanensis).